Here is a 460-residue protein sequence, read N- to C-terminus: Serine--tRNA ligase (460 aa).

Residue 255 to 257 (TAE) coordinates L-serine. ATP contacts are provided by residues 286–288 (RKE) and Val-302. Glu-309 contacts L-serine. 373-376 (EMVS) serves as a coordination point for ATP. Thr-409 contributes to the L-serine binding site.

It belongs to the class-II aminoacyl-tRNA synthetase family. Type-1 seryl-tRNA synthetase subfamily. In terms of assembly, homodimer. The tRNA molecule binds across the dimer.

Its subcellular location is the cytoplasm. It carries out the reaction tRNA(Ser) + L-serine + ATP = L-seryl-tRNA(Ser) + AMP + diphosphate + H(+). It catalyses the reaction tRNA(Sec) + L-serine + ATP = L-seryl-tRNA(Sec) + AMP + diphosphate + H(+). The protein operates within aminoacyl-tRNA biosynthesis; selenocysteinyl-tRNA(Sec) biosynthesis; L-seryl-tRNA(Sec) from L-serine and tRNA(Sec): step 1/1. In terms of biological role, catalyzes the attachment of serine to tRNA(Ser). Is also able to aminoacylate tRNA(Sec) with serine, to form the misacylated tRNA L-seryl-tRNA(Sec), which will be further converted into selenocysteinyl-tRNA(Sec). This is Serine--tRNA ligase from Aeropyrum pernix (strain ATCC 700893 / DSM 11879 / JCM 9820 / NBRC 100138 / K1).